Reading from the N-terminus, the 255-residue chain is Triosephosphate isomerase (255 aa).

10-12 (NWK) lines the substrate pocket. His96 (electrophile) is an active-site residue. The Proton acceptor role is filled by Glu168. Substrate-binding positions include Gly174, Ser213, and 234 to 235 (GG).

The protein belongs to the triosephosphate isomerase family. Homodimer.

It is found in the cytoplasm. It catalyses the reaction D-glyceraldehyde 3-phosphate = dihydroxyacetone phosphate. Its pathway is carbohydrate biosynthesis; gluconeogenesis. It functions in the pathway carbohydrate degradation; glycolysis; D-glyceraldehyde 3-phosphate from glycerone phosphate: step 1/1. Functionally, involved in the gluconeogenesis. Catalyzes stereospecifically the conversion of dihydroxyacetone phosphate (DHAP) to D-glyceraldehyde-3-phosphate (G3P). The protein is Triosephosphate isomerase of Histophilus somni (strain 2336) (Haemophilus somnus).